The primary structure comprises 283 residues: Polyamine aminopropyltransferase (283 aa).

The PABS domain occupies 5–238 (TTWIDEYHKG…GIWSWTFASS (234 aa)). Position 32 (Gln-32) interacts with S-methyl-5'-thioadenosine. Spermidine-binding residues include His-63 and Asp-87. S-methyl-5'-thioadenosine contacts are provided by residues Glu-107 and 139-140 (DG). Catalysis depends on Asp-158, which acts as the Proton acceptor. 158 to 161 (DCSD) contributes to the spermidine binding site.

The protein belongs to the spermidine/spermine synthase family. Homodimer or homotetramer.

It is found in the cytoplasm. The enzyme catalyses S-adenosyl 3-(methylsulfanyl)propylamine + putrescine = S-methyl-5'-thioadenosine + spermidine + H(+). It functions in the pathway amine and polyamine biosynthesis; spermidine biosynthesis; spermidine from putrescine: step 1/1. Its function is as follows. Catalyzes the irreversible transfer of a propylamine group from the amino donor S-adenosylmethioninamine (decarboxy-AdoMet) to putrescine (1,4-diaminobutane) to yield spermidine. This Prochlorococcus marinus (strain AS9601) protein is Polyamine aminopropyltransferase.